Consider the following 209-residue polypeptide: RNA chaperone ProQ (209 aa).

The interval 105–148 (ESQDKAKAKRAALAPKPAAKKAPKKVAVPQRAKTERPAKPAPKA) is disordered.

This sequence belongs to the ProQ family.

The protein resides in the cytoplasm. RNA chaperone with significant RNA binding, RNA strand exchange and RNA duplexing activities. In Shewanella baltica (strain OS223), this protein is RNA chaperone ProQ.